The chain runs to 289 residues: Phosphate import ATP-binding protein PstB 2 (289 aa).

The 240-residue stretch at 37–276 (LHAKVEAFYY…HTPVIFQNPT (240 aa)) folds into the ABC transporter domain. Residue 69–76 (GPSGCGKS) participates in ATP binding.

The protein belongs to the ABC transporter superfamily. Phosphate importer (TC 3.A.1.7) family. In terms of assembly, the complex is composed of two ATP-binding proteins (PstB), two transmembrane proteins (PstC and PstA) and a solute-binding protein (PstS).

Its subcellular location is the cell inner membrane. The catalysed reaction is phosphate(out) + ATP + H2O = ADP + 2 phosphate(in) + H(+). Part of the ABC transporter complex PstSACB involved in phosphate import. Responsible for energy coupling to the transport system. This chain is Phosphate import ATP-binding protein PstB 2, found in Trichormus variabilis (strain ATCC 29413 / PCC 7937) (Anabaena variabilis).